The following is a 235-amino-acid chain: Type II secretion system protein N (235 aa).

Residues 1-34 lie on the Cytoplasmic side of the membrane; sequence MIPRRSSDITIKTRSDVLPFSGASSRWLQRYAPA. Residues 35–55 form a helical; Signal-anchor for type II membrane protein membrane-spanning segment; sequence LLAVALIIAMSISLAWQAAGW. The Periplasmic segment spans residues 56-235; it reads LRLQRSPVAV…EPTTTPTESD (180 aa). The interval 205–235 is disordered; it reads DALRQQMEATPIAEPAEEDSSEPTTTPTESD. Residues 226 to 235 show a composition bias toward low complexity; it reads EPTTTPTESD.

Its subcellular location is the cell inner membrane. Involved in a type II secretion system (T2SS, formerly general secretion pathway, GSP) for the export of proteins. Required for the translocation of a variety of enzymes across the outer membrane. In Pseudomonas aeruginosa (strain ATCC 15692 / DSM 22644 / CIP 104116 / JCM 14847 / LMG 12228 / 1C / PRS 101 / PAO1), this protein is Type II secretion system protein N (xcpP).